The primary structure comprises 1699 residues: Eukaryotic translation initiation factor 2-alpha kinase gcn-2 (1699 aa).

The region spanning Glu-22–His-138 is the RWD domain. Protein kinase domains are found at residues Leu-108–Leu-507 and Val-508–Leu-999. Residues Met-114–Val-122, Lys-154, Leu-497–Val-505, and Lys-520 contribute to the ATP site. Disordered regions lie at residues Asp-572–Pro-615 and Lys-632–Glu-725. Acidic residues predominate over residues Ser-669–Gly-706. Positions Gln-711–Ala-720 are enriched in polar residues. The Proton acceptor role is filled by Asp-829.

Belongs to the protein kinase superfamily. Ser/Thr protein kinase family. GCN2 subfamily.

It carries out the reaction L-seryl-[protein] + ATP = O-phospho-L-seryl-[protein] + ADP + H(+). The enzyme catalyses L-threonyl-[protein] + ATP = O-phospho-L-threonyl-[protein] + ADP + H(+). Its function is as follows. Serine/threonine-protein kinase which phosphorylates the alpha subunit of eukaryotic translation-initiation factor 2 (eIF2alpha), leading to its inactivation and thus to a rapid reduction of translational initiation and repression of global protein synthesis. Involved in the unfolded protein response (UPR) triggered by several stresses including mitochondrial, osmotic and oxidative stresses, amino acid deprivation and UV irradiation, probably by phosphorylating and inhibiting eIF2alpha. In addition, leads to the selective translation/transcription of some mRNA including atf-5, pha-4 and gpdh-1 which are part of the UPR. Required for maintaining lifespan during amino acid starvation. Involved in hypoxia-mediated adaptive protective response. The chain is Eukaryotic translation initiation factor 2-alpha kinase gcn-2 from Caenorhabditis elegans.